A 116-amino-acid chain; its full sequence is Ribosome-binding factor A (116 aa).

This sequence belongs to the RbfA family. Monomer. Binds 30S ribosomal subunits, but not 50S ribosomal subunits or 70S ribosomes.

The protein resides in the cytoplasm. In terms of biological role, one of several proteins that assist in the late maturation steps of the functional core of the 30S ribosomal subunit. Associates with free 30S ribosomal subunits (but not with 30S subunits that are part of 70S ribosomes or polysomes). Required for efficient processing of 16S rRNA. May interact with the 5'-terminal helix region of 16S rRNA. The polypeptide is Ribosome-binding factor A (Staphylococcus aureus (strain JH9)).